The following is a 208-amino-acid chain: Large ribosomal subunit protein uL3 (208 aa).

The protein belongs to the universal ribosomal protein uL3 family. Part of the 50S ribosomal subunit. Forms a cluster with proteins L14 and L19.

One of the primary rRNA binding proteins, it binds directly near the 3'-end of the 23S rRNA, where it nucleates assembly of the 50S subunit. This chain is Large ribosomal subunit protein uL3, found in Salinibacter ruber (strain DSM 13855 / M31).